The following is a 109-amino-acid chain: Tetraspanin-31 (109 aa).

At M1–A12 the chain is on the cytoplasmic side. A helical membrane pass occupies residues L13–W33. At A34–H44 the chain is on the extracellular side. The chain crosses the membrane as a helical span at residues I45 to V65. Over G66–Q72 the chain is Cytoplasmic. A helical membrane pass occupies residues V73 to S93. Residues C94 to N109 lie on the Extracellular side of the membrane. N-linked (GlcNAc...) asparagine glycosylation occurs at N100.

Belongs to the tetraspanin (TM4SF) family.

The protein resides in the membrane. The sequence is that of Tetraspanin-31 (TSPAN31) from Sus scrofa (Pig).